Consider the following 834-residue polypeptide: ATP-dependent RNA helicase ddx23 (834 aa).

Disordered regions lie at residues 1–245 (MDPP…TQFS) and 322–371 (FGGY…GKQI). Basic and acidic residues predominate over residues 10 to 25 (SKRDTKKKDEVNKEQP). Residues 42–54 (SNPTQEEPTNTLQ) are compositionally biased toward polar residues. 4 stretches are compositionally biased toward basic and acidic residues: residues 70 to 110 (GLKE…DYRD), 117 to 164 (GRDR…RRDG), 171 to 205 (RRRD…RDND), and 231 to 245 (DIHK…TQFS). Positions 328 to 362 (NNNNNGNHYNGNIYNNNNNNNNNNNNNNNINNNNN) are enriched in low complexity. The Q motif signature appears at 413-441 (RTWQESNLPREILEAIRQLGYEKPSPIQM). A Helicase ATP-binding domain is found at 444 to 643 (IPISLTGRDI…KKYLRRPCTI (200 aa)). An ATP-binding site is contributed by 457 to 464 (AETGSGKT). Positions 570-573 (DEAD) match the DEAD box motif. The region spanning 654-815 (RIRQTVIFVK…IVPIELLKHP (162 aa)) is the Helicase C-terminal domain. The tract at residues 813 to 834 (KHPSSQQKHGSSKDHNKSVIFK) is disordered. The span at 823 to 834 (SSKDHNKSVIFK) shows a compositional bias: basic and acidic residues.

This sequence belongs to the DEAD box helicase family. DDX23/PRP28 subfamily.

The protein resides in the cytoplasm. It is found in the nucleus. The enzyme catalyses ATP + H2O = ADP + phosphate + H(+). Probable ATP-dependent RNA helicase which may be involved in mRNA splicing. The sequence is that of ATP-dependent RNA helicase ddx23 (helB2) from Dictyostelium discoideum (Social amoeba).